The primary structure comprises 408 residues: RNA-splicing ligase RtcB1 (408 aa).

5 residues coordinate Mn(2+): Asp-75, Cys-78, His-168, His-185, and His-281. 167–171 (NHFIE) provides a ligand contact to GMP. Residues 281–282 (HN), 313–316 (PGSM), Ser-320, 337–340 (HGAG), and Lys-407 each bind GMP. His-337 (GMP-histidine intermediate) is an active-site residue.

This sequence belongs to the RtcB family. Monomer. It depends on Mn(2+) as a cofactor.

It carries out the reaction a 3'-end 3'-phospho-ribonucleotide-RNA + a 5'-end dephospho-ribonucleoside-RNA + GTP = a ribonucleotidyl-ribonucleotide-RNA + GMP + diphosphate. The enzyme catalyses a 3'-end 2',3'-cyclophospho-ribonucleotide-RNA + a 5'-end dephospho-ribonucleoside-RNA + GTP + H2O = a ribonucleotidyl-ribonucleotide-RNA + GMP + diphosphate + H(+). Its function is as follows. GTP-dependent RNA ligase that is involved in RNA repair. Joins RNA with 2',3'-cyclic-phosphate or 3'-phosphate ends to RNA with 5'-hydroxy ends. GTP-dependent RNA ligase that is involved in tRNA repair. Repairs broken tRNA(Asp) and tRNA(Arg) that have been cleaved by colicin E5 or colicin D, respectively. Does not repair damaged 16S rRNA in 30S ribosomal subunits. The chain is RNA-splicing ligase RtcB1 from Escherichia coli (strain ATCC 25922 / DSM 1103 / LMG 8223 / NCIMB 12210 / NCTC 12241 / WDCM 00013 / Seattle 1946).